Here is a 77-residue protein sequence, read N- to C-terminus: Large ribosomal subunit protein bL28 (77 aa).

Positions 1 to 20 (MSRVCQVTGKGPVTGNNISH) are disordered.

This sequence belongs to the bacterial ribosomal protein bL28 family.

The protein is Large ribosomal subunit protein bL28 of Pseudomonas fluorescens (strain SBW25).